A 356-amino-acid chain; its full sequence is Replication factor C subunit 3 (356 aa).

Position 20 is an N6-acetyllysine (Lys-20). Ser-125 carries the post-translational modification Phosphoserine.

It belongs to the activator 1 small subunits family. Subunit of the RFC complex, an heteropentameric complex consisting of a large subunit RFC1 and four small subunits RFC2, RFC3, RFC4 and RFC5; the RFC complex interacts with PCNA. Forms an heterotetrameric complex with RFC2, RFC4 and RFC5; this complex has ATPase activity but is not stimulated by PCNA. The heterotetramer of subunits RFC2, RFC3, RFC4 and RFC5 interacts with RAD17. Interacts with CNTD1; this interaction facilitates crossover formation.

Its subcellular location is the nucleus. Functionally, subunit of the replication factor C (RFC) complex which acts during elongation of primed DNA templates by DNA polymerases delta and epsilon, and is necessary for ATP-dependent loading of proliferating cell nuclear antigen (PCNA) onto primed DNA. In Mus musculus (Mouse), this protein is Replication factor C subunit 3 (Rfc3).